A 356-amino-acid polypeptide reads, in one-letter code: sn-glycerol-3-phosphate import ATP-binding protein UgpC (356 aa).

The 232-residue stretch at 4–235 folds into the ABC transporter domain; the sequence is LKLQAVTKSW…PASLFVASFI (232 aa). ATP is bound at residue 37–44; sequence GPSGCGKS.

The protein belongs to the ABC transporter superfamily. sn-glycerol-3-phosphate importer (TC 3.A.1.1.3) family. As to quaternary structure, the complex is composed of two ATP-binding proteins (UgpC), two transmembrane proteins (UgpA and UgpE) and a solute-binding protein (UgpB).

It localises to the cell inner membrane. The catalysed reaction is sn-glycerol 3-phosphate(out) + ATP + H2O = sn-glycerol 3-phosphate(in) + ADP + phosphate + H(+). Its function is as follows. Part of the ABC transporter complex UgpBAEC involved in sn-glycerol-3-phosphate (G3P) import. Responsible for energy coupling to the transport system. The protein is sn-glycerol-3-phosphate import ATP-binding protein UgpC of Escherichia coli (strain UTI89 / UPEC).